We begin with the raw amino-acid sequence, 210 residues long: Glutathione S-transferase P 2 (210 aa).

One can recognise a GST N-terminal domain in the interval Ser-1–Ser-82. Glutathione-binding positions include Tyr-7, Arg-13, Trp-38, Lys-46, Gln-53 to Ile-54, and Gln-66 to Ser-67. The 122-residue stretch at Asn-83 to Ile-204 folds into the GST C-terminal domain.

It belongs to the GST superfamily. Pi family. As to quaternary structure, homodimer. As to expression, liver, kidney, muscle, skin, lung and ovary.

The enzyme catalyses RX + glutathione = an S-substituted glutathione + a halide anion + H(+). Conjugation of reduced glutathione to a wide number of exogenous and endogenous hydrophobic electrophiles. This Bufo bufo (European toad) protein is Glutathione S-transferase P 2.